Here is a 150-residue protein sequence, read N- to C-terminus: Aspartate 1-decarboxylase (150 aa).

S24 (schiff-base intermediate with substrate; via pyruvic acid) is an active-site residue. At S24 the chain carries Pyruvic acid (Ser). T56 lines the substrate pocket. Y57 acts as the Proton donor in catalysis. 72–74 (GAA) serves as a coordination point for substrate.

This sequence belongs to the PanD family. Heterooctamer of four alpha and four beta subunits. The cofactor is pyruvate. Is synthesized initially as an inactive proenzyme, which is activated by self-cleavage at a specific serine bond to produce a beta-subunit with a hydroxyl group at its C-terminus and an alpha-subunit with a pyruvoyl group at its N-terminus.

The protein localises to the cytoplasm. It catalyses the reaction L-aspartate + H(+) = beta-alanine + CO2. Its pathway is cofactor biosynthesis; (R)-pantothenate biosynthesis; beta-alanine from L-aspartate: step 1/1. In terms of biological role, catalyzes the pyruvoyl-dependent decarboxylation of aspartate to produce beta-alanine. In Beijerinckia indica subsp. indica (strain ATCC 9039 / DSM 1715 / NCIMB 8712), this protein is Aspartate 1-decarboxylase.